Reading from the N-terminus, the 229-residue chain is MKAIILAAGLGTRLRPMTENTPKALVQVNQKPLIEYQIEFLKEKGINDIIIIVGYLKEQFDYLKEKYGVRLVFNDKYADYNNFYSLYLVKEELANSYVIDADNYLFKNMFRNDLTRSTYFSVYREDCTNEWFLVYGDDYKVQDIIVDSKAGRILSGVSFWDAPTAEKIVSFIDKAYASGEFVDLYWDNMVKDNIKELDVYVEELEGNSIYEIDSVQDYRKLEEILKNEN.

Residues Leu6, Ala8, Gly9, Tyr80, Asn82, Ser85, and Ala101 each contribute to the CDP-choline site. Asp102 lines the Mg(2+) pocket. A CDP-choline-binding site is contributed by Tyr185. Residues Glu211 and Asp213 each coordinate Mg(2+).

It belongs to the LicC/PntC cytidylyltransferase family. As to quaternary structure, monomer. Forms dimers in LicC-CDP-Cho-Mg(2+) crystals, but the monomer is probably the biologically functional unit. Mg(2+) is required as a cofactor.

The catalysed reaction is phosphocholine + CTP + H(+) = CDP-choline + diphosphate. It functions in the pathway cell wall biogenesis; teichoic acid biosynthesis. Its pathway is cell wall biogenesis; lipoteichoic acid biosynthesis. With respect to regulation, mg(2+) in slight excess of CTP gives maximal activity. Strongly inhibited by Ca(2+) and several other metal ions, such as Cd(2+), Co(2+), Cu(2+), Mn(2+), Ni(2+), Zn(2+) and Fe(2+). Also inhibited by Mg(2+) at high concentrations. CDP-Cho is a competitive inhibitor with respect to CTP, whereas diphosphate is a mixed-type inhibitor with respect to CTP. Its function is as follows. Cytidylyltransferase involved in the biosynthesis of the phosphocholine containing cell wall constituents, teichoic acid and lipoteichoic acid, which are essential for cell separation and pathogenesis. Catalyzes the activation of phosphocholine (P-Cho) to CDP-choline (CDP-Cho). Can also use phosphoethanolamine and 2-aminoethylphosphonate, with much lower efficiency. Shows lower activity with dCTP, weak activity with ATP and no activity with GTP, TTP, UTP, dATP, dGTP and dTTP. This chain is Choline-phosphate cytidylyltransferase, found in Streptococcus pneumoniae (strain ATCC BAA-255 / R6).